Consider the following 878-residue polypeptide: Calcium-transporting ATPase 1 (878 aa).

A run of 4 helical transmembrane segments spans residues 50–72 (LFID…VQLF), 76–95 (FVES…VAVV), 243–263 (LGWV…LRLF), and 281–301 (FAVA…VTIV). Valine 287, alanine 288, isoleucine 290, and glutamate 292 together coordinate Ca(2+). Residue aspartate 334 is the 4-aspartylphosphate intermediate of the active site. The next 6 membrane-spanning stretches (helical) occupy residues 681–701 (LFSG…VGWV), 704–724 (FTAL…AIAL), 753–773 (VILI…YVGQ), 779–799 (MGVA…TFAA), 816–836 (YVLM…LPFL), and 845–865 (AFGW…VICM). The Ca(2+) site is built by asparagine 713 and aspartate 717.

This sequence belongs to the cation transport ATPase (P-type) (TC 3.A.3) family. Type IIA subfamily.

Its subcellular location is the cell membrane. It catalyses the reaction Ca(2+)(in) + ATP + H2O = Ca(2+)(out) + ADP + phosphate + H(+). Inhibited by very high concentrations of cyclopiazonic acid (CPA). In terms of biological role, catalyzes the hydrolysis of ATP coupled with the transport of calcium. This Lactococcus lactis subsp. lactis (strain IL1403) (Streptococcus lactis) protein is Calcium-transporting ATPase 1 (yoaB).